A 233-amino-acid chain; its full sequence is Aspartate/glutamate leucyltransferase (233 aa).

It belongs to the R-transferase family. Bpt subfamily.

Its subcellular location is the cytoplasm. It carries out the reaction N-terminal L-glutamyl-[protein] + L-leucyl-tRNA(Leu) = N-terminal L-leucyl-L-glutamyl-[protein] + tRNA(Leu) + H(+). The enzyme catalyses N-terminal L-aspartyl-[protein] + L-leucyl-tRNA(Leu) = N-terminal L-leucyl-L-aspartyl-[protein] + tRNA(Leu) + H(+). Functions in the N-end rule pathway of protein degradation where it conjugates Leu from its aminoacyl-tRNA to the N-termini of proteins containing an N-terminal aspartate or glutamate. The sequence is that of Aspartate/glutamate leucyltransferase from Vibrio cholerae serotype O1 (strain ATCC 39315 / El Tor Inaba N16961).